Reading from the N-terminus, the 225-residue chain is ATP synthase subunit a (225 aa).

6 helical membrane-spanning segments follow: residues 18–38 (LSLNWTSTFLGLLLIPSMFWL), 73–93 (ILISIFIMMLFNNFMGLFPYI), 100–120 (MTLTFSIALPMWMSFMLFGWI), 126–146 (MFTHLVPQGTPNALMSFMVLI), 156–176 (GTLAVRLAANMIAGHLLLTLL), and 187–207 (IMLFLIIGQMLLLILESAVAM).

The protein belongs to the ATPase A chain family. F-type ATPases have 2 components, CF(1) - the catalytic core - and CF(0) - the membrane proton channel. CF(1) has five subunits: alpha(3), beta(3), gamma(1), delta(1), epsilon(1). CF(0) has three main subunits: a, b and c.

The protein resides in the mitochondrion inner membrane. Functionally, mitochondrial membrane ATP synthase (F(1)F(0) ATP synthase or Complex V) produces ATP from ADP in the presence of a proton gradient across the membrane which is generated by electron transport complexes of the respiratory chain. F-type ATPases consist of two structural domains, F(1) - containing the extramembraneous catalytic core and F(0) - containing the membrane proton channel, linked together by a central stalk and a peripheral stalk. During catalysis, ATP synthesis in the catalytic domain of F(1) is coupled via a rotary mechanism of the central stalk subunits to proton translocation. Key component of the proton channel; it may play a direct role in the translocation of protons across the membrane. The polypeptide is ATP synthase subunit a (ATP6) (Locusta migratoria (Migratory locust)).